We begin with the raw amino-acid sequence, 769 residues long: 5-methyltetrahydropteroyltriglutamate--homocysteine methyltransferase (769 aa).

5-methyltetrahydropteroyltri-L-glutamate-binding positions include 18-21 (RELK) and lysine 127. L-homocysteine-binding positions include 447-449 (IGS) and glutamate 500. Residues 447–449 (IGS) and glutamate 500 contribute to the L-methionine site. Residues 531–532 (RC) and tryptophan 577 each bind 5-methyltetrahydropteroyltri-L-glutamate. Aspartate 615 provides a ligand contact to L-homocysteine. Aspartate 615 is an L-methionine binding site. Glutamate 621 lines the 5-methyltetrahydropteroyltri-L-glutamate pocket. Zn(2+) contacts are provided by histidine 657, cysteine 659, and glutamate 681. Histidine 710 acts as the Proton donor in catalysis. Residue cysteine 742 participates in Zn(2+) binding.

Belongs to the vitamin-B12 independent methionine synthase family. Requires Zn(2+) as cofactor.

It carries out the reaction 5-methyltetrahydropteroyltri-L-glutamate + L-homocysteine = tetrahydropteroyltri-L-glutamate + L-methionine. The protein operates within amino-acid biosynthesis; L-methionine biosynthesis via de novo pathway; L-methionine from L-homocysteine (MetE route): step 1/1. Functionally, catalyzes the transfer of a methyl group from 5-methyltetrahydrofolate to homocysteine resulting in methionine formation. The polypeptide is 5-methyltetrahydropteroyltriglutamate--homocysteine methyltransferase (Chelativorans sp. (strain BNC1)).